A 33-amino-acid chain; its full sequence is Photosystem II reaction center protein Psb30 (33 aa).

A helical transmembrane segment spans residues 8–28 (QLTALAFIVLSGPLVIALLAF).

The protein belongs to the Psb30/Ycf12 family. PSII is composed of 1 copy each of membrane proteins PsbA, PsbB, PsbC, PsbD, PsbE, PsbF, PsbH, PsbI, PsbJ, PsbK, PsbL, PsbM, PsbT, PsbX, PsbY, PsbZ, Psb30/Ycf12, peripheral proteins of the oxygen-evolving complex and a large number of cofactors. It forms dimeric complexes.

It is found in the plastid. The protein resides in the chloroplast thylakoid membrane. Its function is as follows. A core subunit of photosystem II (PSII), probably helps stabilize the reaction center. This chain is Photosystem II reaction center protein Psb30, found in Staurastrum punctulatum (Green alga).